The chain runs to 512 residues: Perphorin-1 (512 aa).

An N-terminal signal peptide occupies residues 1–18 (MMRKALLALCVATAFAVA). Asn49, Asn96, Asn118, Asn378, Asn381, Asn403, and Asn476 each carry an N-linked (GlcNAc...) asparagine glycan.

It localises to the secreted. Its subcellular location is the extracellular space. The protein localises to the extracellular matrix. In terms of biological role, may be involved in conversion of asexual males and females to the sexual pathway. This Volvox carteri (Green alga) protein is Perphorin-1.